A 522-amino-acid chain; its full sequence is Involucrin (522 aa).

The span at 1–15 (MSQQHTLPVTLSPAL) shows a compositional bias: polar residues. 3 disordered regions span residues 1-126 (MSQQ…LEEE), 159-329 (QEGQ…LVQQ), and 366-496 (QEGQ…QPVL). Positions 76-91 (EQQQQEPQEQELQQQH) are enriched in low complexity. The segment covering 92-126 (WEQHEEHQKAENPEQQLKQEKAQRDQQLNEHLEEE) has biased composition (basic and acidic residues). Residues 169–181 (QEGQLELPEQQEG) are compositionally biased toward low complexity. 5 stretches are compositionally biased toward basic and acidic residues: residues 182-198 (QLEH…HLDQ), 214-231 (KHLE…HQKG), 252-264 (QLKH…KQPE), 274-290 (KHLE…EHQE), and 305-323 (QLEE…EGQL). A compositionally biased stretch (low complexity) spans 375–389 (QQQGQLEVSEQQVGQ). Basic and acidic residues-rich tracts occupy residues 391 to 401 (KHLEQEGKQLE), 409 to 418 (QLKHLEKQEA), and 431 to 465 (KHPE…DLEQ). Low complexity predominate over residues 466–479 (QKGQLEQQQGQLEQ).

The protein belongs to the involucrin family. In terms of assembly, directly or indirectly cross-linked to cornifelin (CNFN). In terms of processing, substrate of transglutaminase. Specific glutamines or lysines are cross-linked to keratins, desmoplakin and to inter involucrin molecules. As to expression, keratinocytes of epidermis and other stratified squamous epithelia.

The protein localises to the cytoplasm. Its function is as follows. Part of the insoluble cornified cell envelope (CE) of stratified squamous epithelia. This Hylobates lar (Lar gibbon) protein is Involucrin (IVL).